Reading from the N-terminus, the 399-residue chain is Acetate kinase 2 (399 aa).

Asparagine 10 is a binding site for Mg(2+). ATP is bound at residue lysine 17. A substrate-binding site is contributed by arginine 89. The Proton donor/acceptor role is filled by aspartate 146. Residues 206–210 (HLGNG), 281–283 (DCR), and 329–333 (GIGEN) contribute to the ATP site. Residue glutamate 384 coordinates Mg(2+).

This sequence belongs to the acetokinase family. Homodimer. The cofactor is Mg(2+). Requires Mn(2+) as cofactor.

The protein resides in the cytoplasm. It catalyses the reaction acetate + ATP = acetyl phosphate + ADP. It functions in the pathway metabolic intermediate biosynthesis; acetyl-CoA biosynthesis; acetyl-CoA from acetate: step 1/2. Catalyzes the formation of acetyl phosphate from acetate and ATP. Can also catalyze the reverse reaction. The protein is Acetate kinase 2 of Neisseria meningitidis serogroup A / serotype 4A (strain DSM 15465 / Z2491).